The following is a 159-amino-acid chain: Cytochrome c-type biogenesis protein CcmE (159 aa).

At 1–7 the chain is on the cytoplasmic side; that stretch reads MTRKGRR. The helical; Signal-anchor for type II membrane protein transmembrane segment at 8 to 28 threads the bilayer; it reads LVLIGAGLGVLALAAGLILSA. The Periplasmic segment spans residues 29–159; sequence LNDTIVFFRS…AAPVQRAPGS (131 aa). Heme is bound by residues His-121 and Tyr-125. The segment at 134–159 is disordered; it reads LKKQGRWQEGGPAPGTAAPVQRAPGS.

The protein belongs to the CcmE/CycJ family.

It localises to the cell inner membrane. In terms of biological role, heme chaperone required for the biogenesis of c-type cytochromes. Transiently binds heme delivered by CcmC and transfers the heme to apo-cytochromes in a process facilitated by CcmF and CcmH. The polypeptide is Cytochrome c-type biogenesis protein CcmE (Xanthobacter autotrophicus (strain ATCC BAA-1158 / Py2)).